Consider the following 249-residue polypeptide: Probable proteasome subunit alpha type-2 (249 aa).

It belongs to the peptidase T1A family. As to quaternary structure, the 26S proteasome consists of a 20S proteasome core and two 19S regulatory subunits. The 20S proteasome core is composed of 28 subunits that are arranged in four stacked rings, resulting in a barrel-shaped structure. The two end rings are each formed by seven alpha subunits, and the two central rings are each formed by seven beta subunits. The catalytic chamber with the active sites is on the inside of the barrel.

The protein resides in the cytoplasm. The protein localises to the nucleus. Its function is as follows. The proteasome is a multicatalytic proteinase complex which is characterized by its ability to cleave peptides with Arg, Phe, Tyr, Leu, and Glu adjacent to the leaving group at neutral or slightly basic pH. The proteasome has an ATP-dependent proteolytic activity. This Neurospora crassa (strain ATCC 24698 / 74-OR23-1A / CBS 708.71 / DSM 1257 / FGSC 987) protein is Probable proteasome subunit alpha type-2 (pca-2).